Reading from the N-terminus, the 423-residue chain is Serine--tRNA ligase (423 aa).

229-231 (TAE) lines the L-serine pocket. 260 to 262 (RRE) lines the ATP pocket. Glu283 contacts L-serine. Position 347 to 350 (347 to 350 (EISS)) interacts with ATP. Ser383 serves as a coordination point for L-serine.

The protein belongs to the class-II aminoacyl-tRNA synthetase family. Type-1 seryl-tRNA synthetase subfamily. As to quaternary structure, homodimer. The tRNA molecule binds across the dimer.

The protein resides in the cytoplasm. The catalysed reaction is tRNA(Ser) + L-serine + ATP = L-seryl-tRNA(Ser) + AMP + diphosphate + H(+). The enzyme catalyses tRNA(Sec) + L-serine + ATP = L-seryl-tRNA(Sec) + AMP + diphosphate + H(+). The protein operates within aminoacyl-tRNA biosynthesis; selenocysteinyl-tRNA(Sec) biosynthesis; L-seryl-tRNA(Sec) from L-serine and tRNA(Sec): step 1/1. In terms of biological role, catalyzes the attachment of serine to tRNA(Ser). Is also able to aminoacylate tRNA(Sec) with serine, to form the misacylated tRNA L-seryl-tRNA(Sec), which will be further converted into selenocysteinyl-tRNA(Sec). This chain is Serine--tRNA ligase, found in Trichlorobacter lovleyi (strain ATCC BAA-1151 / DSM 17278 / SZ) (Geobacter lovleyi).